Consider the following 556-residue polypeptide: Formate--tetrahydrofolate ligase (556 aa).

Position 65–72 (65–72 (TAAGEGKS)) interacts with ATP.

It belongs to the formate--tetrahydrofolate ligase family.

It catalyses the reaction (6S)-5,6,7,8-tetrahydrofolate + formate + ATP = (6R)-10-formyltetrahydrofolate + ADP + phosphate. It functions in the pathway one-carbon metabolism; tetrahydrofolate interconversion. The chain is Formate--tetrahydrofolate ligase from Elusimicrobium minutum (strain Pei191).